The following is a 195-amino-acid chain: Imidazoleglycerol-phosphate dehydratase (195 aa).

The protein belongs to the imidazoleglycerol-phosphate dehydratase family.

It localises to the cytoplasm. The enzyme catalyses D-erythro-1-(imidazol-4-yl)glycerol 3-phosphate = 3-(imidazol-4-yl)-2-oxopropyl phosphate + H2O. It participates in amino-acid biosynthesis; L-histidine biosynthesis; L-histidine from 5-phospho-alpha-D-ribose 1-diphosphate: step 6/9. The protein is Imidazoleglycerol-phosphate dehydratase of Cupriavidus metallidurans (strain ATCC 43123 / DSM 2839 / NBRC 102507 / CH34) (Ralstonia metallidurans).